We begin with the raw amino-acid sequence, 855 residues long: Inactive rhomboid protein 1 (855 aa).

Residues 1–36 (MSEARRDSTSSLQRKKPPWLKLDIPSAAPPAAEEPS) are disordered. At 1–411 (MSEARRDSTS…HRPFFTYWLT (411 aa)) the chain is on the cytoplasmic side. The segment covering 25–36 (PSAAPPAAEEPS) has biased composition (low complexity). 2 positions are modified to phosphoserine: Ser-76 and Ser-176. Phosphothreonine occurs at positions 180 and 183. Phosphoserine is present on Ser-390. A helical transmembrane segment spans residues 412-432 (FVHSLVTVLAVCIYGIAPVGF). The Lumenal portion of the chain corresponds to 433–655 (SQHETVDSVL…NPEVPDQFYR (223 aa)). An N-linked (GlcNAc...) asparagine glycan is attached at Asn-583. Residues 656-676 (LWLSLFLHAGILHCLVSICFQ) traverse the membrane as a helical segment. At 677–691 (MTVLRDLEKLAGWHR) the chain is on the cytoplasmic side. Residues 692 to 712 (IAIIYLLSGVTGNLASAIFLP) traverse the membrane as a helical segment. The Lumenal segment spans residues 713–714 (YR). A helical transmembrane segment spans residues 715–735 (AEVGPAGSQFGILACLFVELF). At 736-746 (QSWQILARPWR) the chain is on the cytoplasmic side. The chain crosses the membrane as a helical span at residues 747–767 (AFFKLLAVVLFLFTFGLLPWI). Over 768–772 (DNFAH) the chain is Lumenal. Residues 773 to 793 (ISGFISGLFLSFAFLPYISFG) form a helical membrane-spanning segment. Residues 794–803 (KFDLYRKRCQ) lie on the Cytoplasmic side of the membrane. A helical transmembrane segment spans residues 804 to 824 (IIVFQVVFLGLLAGLVVLFYF). The Lumenal segment spans residues 825–855 (YPVRCEWCEFLTCIPFTDKFCEKYELDAQLH).

The protein belongs to the peptidase S54 family. In terms of assembly, homodimer, or homooligomer. Interacts with TGFA and HBEGF. Interacts with EGF; may retain EGF in the endoplasmic reticulum and regulates its degradation through the endoplasmic reticulum-associated degradation (ERAD). Interacts (via cytoplasmic N-terminus) with FRMD8/iTAP; this interaction leads to mutual protein stabilization. Interacts with ADAM17/TACE.

The protein resides in the endoplasmic reticulum membrane. It localises to the golgi apparatus membrane. Its function is as follows. Regulates ADAM17 protease, a sheddase of the epidermal growth factor (EGF) receptor ligands and TNF, thereby plays a role in sleep, cell survival, proliferation, migration and inflammation. Does not exhibit any protease activity on its own. This chain is Inactive rhomboid protein 1 (RHBDF1), found in Plecturocebus moloch (Dusky titi monkey).